Here is a 211-residue protein sequence, read N- to C-terminus: Small ribosomal subunit protein uS4 (211 aa).

In terms of domain architecture, S4 RNA-binding spans 98 to 161 (RRLDNVVYRL…RDIPFIKENL (64 aa)).

This sequence belongs to the universal ribosomal protein uS4 family. In terms of assembly, part of the 30S ribosomal subunit. Contacts protein S5. The interaction surface between S4 and S5 is involved in control of translational fidelity.

In terms of biological role, one of the primary rRNA binding proteins, it binds directly to 16S rRNA where it nucleates assembly of the body of the 30S subunit. With S5 and S12 plays an important role in translational accuracy. This Aquifex aeolicus (strain VF5) protein is Small ribosomal subunit protein uS4.